Reading from the N-terminus, the 74-residue chain is Imcroporin (74 aa).

A signal peptide spans 1–22 (MKFQYLLAVFLIVLVVTDHCQA). Lys39 is modified (lysine amide; partial). Residues 45 to 74 (QLEARFEPKQRNFRKRELDFEKLFANMPDY) constitute a propeptide that is removed on maturation.

It belongs to the non-disulfide-bridged peptide (NDBP) superfamily. Short antimicrobial peptide (group 4) family. As to expression, expressed by the venom gland.

Its subcellular location is the secreted. The protein resides in the target cell membrane. Its function is as follows. Has potent antibacterial activity against Gram-positive bacteria M.luteus, B.thuringiensis, S.aureus and B.subtilis, but not Gram-negative bacteria. Shows a weak cytotoxicity effect against mammalian cell lines and relatively low hemolytic activity against human erythrocytes. The protein is Imcroporin of Isometrus maculatus (Lesser brown scorpion).